We begin with the raw amino-acid sequence, 230 residues long: Early E1A protein (230 aa).

An interaction with RB1 in competition with E2F1 region spans residues 40–48; that stretch reads PSLHDLFDL. Positions 106 to 110 match the LXCXE motif, interaction with host RB1 motif; sequence LLCLE. A zinc finger spans residues 145–163; sequence CLRCAYYQEQGENSICGLC. The segment at 189 to 230 is disordered; sequence KPGSRKRSAVTSRGSVESSKRPCLPEPEQTEPLDLSLKPRPQ. Residues 220–224 carry the PXDLS motif, CTBP-binding motif; sequence PLDLS. The Nuclear localization signal signature appears at 226 to 230; that stretch reads KPRPQ.

This sequence belongs to the adenoviridae E1A protein family. In terms of assembly, interacts with host UBE2I; this interaction interferes with polySUMOylation. Interacts with host RB1; this interaction induces the aberrant dissociation of RB1-E2F1 complex thereby disrupting the activity of RB1 and activating E2F1-regulated genes. Interacts with host ATF7; the interaction enhances ATF7-mediated viral transactivation activity which requires the zinc binding domains of both proteins. Isoform early E1A 32 kDa protein and isoform early E1A 26 kDa protein interact (via N-terminus) with CUL1 and E3 ubiquitin ligase RBX1; these interactions inhibit RBX1-CUL1-dependent elongation reaction of ubiquitin chains and attenuate ubiquitination of SCF(FBXW7) target proteins. Interacts (via PXLXP motif) with host ZMYND11/BS69 (via MYND-type zinc finger); this interaction inhibits E1A mediated transactivation. Interacts with host EP300; this interaction stimulates the acetylation of RB1 by recruiting EP300 and RB1 into a multimeric-protein complex. Interacts with host CTBP1 and CTBP2; this interaction seems to potentiate viral replication. Interacts with host DCAF7. Interacts with host DYRK1A. Interacts with host KPNA4; this interaction allows E1A import into the host nucleus. Interacts with host EP400; this interaction stabilizes MYC. Interacts with host TBP protein; this interaction probably disrupts the TBP-TATA complex.

Its subcellular location is the host nucleus. Its function is as follows. Plays a role in viral genome replication by driving entry of quiescent cells into the cell cycle. Stimulation of progression from G1 to S phase allows the virus to efficiently use the cellular DNA replicating machinery to achieve viral genome replication. E1A protein has both transforming and trans-activating activities. Induces the disassembly of the E2F1 transcription factor from RB1 by direct competition for the same binding site on RB1, with subsequent transcriptional activation of E2F1-regulated S-phase genes and of the E2 region of the adenoviral genome. Release of E2F1 leads to the ARF-mediated inhibition of MDM2 and causes TP53/p53 to accumulate because it is not targeted for degradation by MDM2-mediated ubiquitination anymore. This increase in TP53, in turn, would arrest the cell proliferation and direct its death but this effect is counteracted by the viral protein E1B-55K. Inactivation of the ability of RB1 to arrest the cell cycle is critical for cellular transformation, uncontrolled cellular growth and proliferation induced by viral infection. Interaction with RBX1 and CUL1 inhibits ubiquitination of the proteins targeted by SCF(FBXW7) ubiquitin ligase complex, and may be linked to unregulated host cell proliferation. The tumorigenesis-restraining activity of E1A may be related to the disruption of the host CtBP-CtIP complex through the CtBP binding motif. This is Early E1A protein from Canine adenovirus serotype 1 (strain CLL) (CAdV-1).